We begin with the raw amino-acid sequence, 126 residues long: Heavy metal-associated isoprenylated plant protein 14 (126 aa).

Positions 3-69 (AKNAVLQLSI…LCNTEIVSVD (67 aa)) constitute an HMA domain. Cys123 carries the cysteine methyl ester modification. A lipid anchor (S-farnesyl cysteine) is attached at Cys123. Residues 124 to 126 (VIM) constitute a propeptide, removed in mature form.

The protein belongs to the HIPP family.

In terms of biological role, probable heavy-metal-binding protein. The sequence is that of Heavy metal-associated isoprenylated plant protein 14 from Arabidopsis thaliana (Mouse-ear cress).